Reading from the N-terminus, the 273-residue chain is 4-hydroxy-tetrahydrodipicolinate reductase (273 aa).

NAD(+) is bound by residues 12–17 (GAGGRM) and Glu-38. Arg-39 contributes to the NADP(+) binding site. Residues 102–104 (GTT) and 126–129 (AANF) contribute to the NAD(+) site. His-159 functions as the Proton donor/acceptor in the catalytic mechanism. His-160 contributes to the (S)-2,3,4,5-tetrahydrodipicolinate binding site. Catalysis depends on Lys-163, which acts as the Proton donor. A (S)-2,3,4,5-tetrahydrodipicolinate-binding site is contributed by 169–170 (GT).

This sequence belongs to the DapB family. Homotetramer.

It is found in the cytoplasm. It catalyses the reaction (S)-2,3,4,5-tetrahydrodipicolinate + NAD(+) + H2O = (2S,4S)-4-hydroxy-2,3,4,5-tetrahydrodipicolinate + NADH + H(+). The enzyme catalyses (S)-2,3,4,5-tetrahydrodipicolinate + NADP(+) + H2O = (2S,4S)-4-hydroxy-2,3,4,5-tetrahydrodipicolinate + NADPH + H(+). It participates in amino-acid biosynthesis; L-lysine biosynthesis via DAP pathway; (S)-tetrahydrodipicolinate from L-aspartate: step 4/4. Functionally, catalyzes the conversion of 4-hydroxy-tetrahydrodipicolinate (HTPA) to tetrahydrodipicolinate. The polypeptide is 4-hydroxy-tetrahydrodipicolinate reductase (Salmonella enteritidis PT4 (strain P125109)).